A 185-amino-acid chain; its full sequence is uncharacterized protein (185 aa).

The next 2 helical transmembrane spans lie at Met1–Ala19 and Ala105–Val125.

It is found in the membrane. This is an uncharacterized protein from Caenorhabditis elegans.